Reading from the N-terminus, the 349-residue chain is Probable transporter vicT (349 aa).

In terms of domain architecture, EamA spans 25 to 153 (IAAALLHALA…TALAGVVLVL (129 aa)). 9 consecutive transmembrane segments (helical) span residues 49-69 (PFTV…AYLW), 89-109 (AAGG…LSLS), 111-131 (ATVL…YWEG), 133-153 (TFAF…VLVL), 179-199 (LKGV…FSAM), 215-235 (FGVS…EVVW), 244-264 (LLAI…AGLG), 269-289 (RVTI…WAIW), and 294-314 (NVLT…PYLF).

The protein belongs to the TPT transporter family. SLC35D subfamily.

Its subcellular location is the membrane. In terms of biological role, probable transporter; part of the gene cluster that mediates the biosynthesis of the secondary metabolite victorin, the molecular basis for Victoria blight of oats. The polypeptide is Probable transporter vicT (Bipolaris victoriae (strain FI3) (Victoria blight of oats agent)).